Reading from the N-terminus, the 208-residue chain is Large ribosomal subunit protein bL25 (208 aa).

Belongs to the bacterial ribosomal protein bL25 family. CTC subfamily. In terms of assembly, part of the 50S ribosomal subunit; part of the 5S rRNA/L5/L18/L25 subcomplex. Contacts the 5S rRNA. Binds to the 5S rRNA independently of L5 and L18.

Functionally, this is one of the proteins that binds to the 5S RNA in the ribosome where it forms part of the central protuberance. In Leptothrix cholodnii (strain ATCC 51168 / LMG 8142 / SP-6) (Leptothrix discophora (strain SP-6)), this protein is Large ribosomal subunit protein bL25.